Consider the following 284-residue polypeptide: Nucleotide-binding protein VSAL_I0495 (284 aa).

8–15 is an ATP binding site; it reads GNSGAGKS. 56 to 59 serves as a coordination point for GTP; that stretch reads DIRN.

It belongs to the RapZ-like family.

Displays ATPase and GTPase activities. This chain is Nucleotide-binding protein VSAL_I0495, found in Aliivibrio salmonicida (strain LFI1238) (Vibrio salmonicida (strain LFI1238)).